The sequence spans 261 residues: tRNA (guanine-N(7)-)-methyltransferase (261 aa).

Residues E75, E100, D127, and D150 each contribute to the S-adenosyl-L-methionine site. Residue D150 is part of the active site. K154 serves as a coordination point for substrate. An interaction with RNA region spans residues 156-161 (RHNKRR). Residues D186 and 223-226 (THFE) each bind substrate.

It belongs to the class I-like SAM-binding methyltransferase superfamily. TrmB family.

The catalysed reaction is guanosine(46) in tRNA + S-adenosyl-L-methionine = N(7)-methylguanosine(46) in tRNA + S-adenosyl-L-homocysteine. It participates in tRNA modification; N(7)-methylguanine-tRNA biosynthesis. Its function is as follows. Catalyzes the formation of N(7)-methylguanine at position 46 (m7G46) in tRNA. The protein is tRNA (guanine-N(7)-)-methyltransferase of Xanthomonas axonopodis pv. citri (strain 306).